Consider the following 997-residue polypeptide: Translation initiation factor IF-2 (997 aa).

The interval 101–406 is disordered; that stretch reads ELAAEQAAAR…SRNQHQDRRH (306 aa). 2 stretches are compositionally biased toward low complexity: residues 116–185 and 195–209; these read AEAV…QAEP and AAPAQAVAEPVEPAK. The span at 231–242 shows a compositional bias: polar residues; sequence TELTSQTPTPVA. The segment covering 256 to 280 has biased composition (low complexity); it reads AEPAAAPKTTAKPGEIRRAAAPAAP. Basic and acidic residues predominate over residues 281 to 292; that stretch reads DRAREEARRAAE. Residues 385 to 394 are compositionally biased toward gly residues; the sequence is RAGGKGGRGG. The 168-residue stretch at 498–665 folds into the tr-type G domain; it reads PRAPVVTVMG…NVLLQAEILE (168 aa). Residues 507–514 are G1; it reads GHVDHGKT. 507 to 514 lines the GTP pocket; that stretch reads GHVDHGKT. Residues 532-536 form a G2 region; the sequence is GITQH. The segment at 553-556 is G3; the sequence is DTPG. GTP-binding positions include 553–557 and 607–610; these read DTPGH and NKID. The interval 607–610 is G4; it reads NKID. The tract at residues 643–645 is G5; that stretch reads SAK.

Belongs to the TRAFAC class translation factor GTPase superfamily. Classic translation factor GTPase family. IF-2 subfamily.

Its subcellular location is the cytoplasm. In terms of biological role, one of the essential components for the initiation of protein synthesis. Protects formylmethionyl-tRNA from spontaneous hydrolysis and promotes its binding to the 30S ribosomal subunits. Also involved in the hydrolysis of GTP during the formation of the 70S ribosomal complex. The sequence is that of Translation initiation factor IF-2 from Bordetella pertussis (strain Tohama I / ATCC BAA-589 / NCTC 13251).